Reading from the N-terminus, the 370-residue chain is Sodium-dependent organic anion transporter (370 aa).

The tract at residues 1–24 (MSADCEGNSTCPANSTEEDPPVGM) is disordered. Topologically, residues 1 to 32 (MSADCEGNSTCPANSTEEDPPVGMEGQGSLKL) are extracellular. N-linked (GlcNAc...) asparagine glycans are attached at residues Asn-8 and Asn-14. The helical transmembrane segment at 33 to 53 (VFTVLSAVMVGLVMFSFGCSV) threads the bilayer. Residues 54-67 (ESRKLWLHLRRPWG) are Cytoplasmic-facing. Residues 68–88 (IAVGLLCQFGLMPLTAYLLAI) traverse the membrane as a helical segment. The Extracellular segment spans residues 89–97 (GFGLKPFQA). Residues 98-118 (IAVLIMGSCPGGTVSNVLTFW) form a helical membrane-spanning segment. Residues 119-126 (VDGDMDLS) lie on the Cytoplasmic side of the membrane. The chain crosses the membrane as a helical span at residues 127 to 147 (ISMTTCSTVAALGMMPLCLYV). Over 148–159 (YTRSWTLPQSLT) the chain is Extracellular. The helical transmembrane segment at 160–180 (IPYQSIGITLVSLVVPVASGI) threads the bilayer. Over 181 to 195 (YVNYRWPKQATFILK) the chain is Cytoplasmic. The helical transmembrane segment at 196-216 (VGAAVGGMLLLVVAVTGVVLA) threads the bilayer. Topologically, residues 217–224 (KGWNIDVT) are extracellular. Residues 225-245 (LLVISCIFPLVGHVMGFLLAF) traverse the membrane as a helical segment. At 246-265 (LTHQSWQRCRTISIETGAQN) the chain is on the cytoplasmic side. The chain crosses the membrane as a helical span at residues 266–283 (IQLCIAMMQLSFSAEYLV). Position 284 (Gln-284) is a topological domain, extracellular. A helical transmembrane segment spans residues 285–305 (LLNFALAYGLFQVLHGLLIVA). Topologically, residues 306–370 (AYQAYKRRQK…ELTSHVPSCE (65 aa)) are cytoplasmic.

This sequence belongs to the bile acid:sodium symporter (BASS) (TC 2.A.28) family. Post-translationally, glycosylated. As to expression, highly expressed in heart, lung, spleen and adrenal gland. Moderately expressed in skeletal muscle, testis and small intestine.

The protein localises to the membrane. The catalysed reaction is estrone 3-sulfate(out) + 2 Na(+)(out) = estrone 3-sulfate(in) + 2 Na(+)(in). The enzyme catalyses 17beta-estradiol 3-sulfate(out) + 2 Na(+)(out) = 17beta-estradiol 3-sulfate(in) + 2 Na(+)(in). It carries out the reaction dehydroepiandrosterone 3-sulfate(out) + 2 Na(+)(out) = dehydroepiandrosterone 3-sulfate(in) + 2 Na(+)(in). It catalyses the reaction androst-5-ene-diol 3-sulfate(out) + 2 Na(+)(out) = androst-5-ene-diol 3-sulfate(in) + 2 Na(+)(in). The catalysed reaction is pregnenolone sulfate(out) + 2 Na(+)(out) = pregnenolone sulfate(in) + 2 Na(+)(in). The enzyme catalyses taurolithocholate 3-sulfate(out) + 2 Na(+)(out) = taurolithocholate 3-sulfate(in) + 2 Na(+)(in). It carries out the reaction androsterone 3alpha-sulfate(out) + 2 Na(+)(out) = androsterone 3alpha-sulfate(in) + 2 Na(+)(in). It catalyses the reaction 5alpha-dihydrotestosterone sulfate(out) + 2 Na(+)(out) = 5alpha-dihydrotestosterone sulfate(in) + 2 Na(+)(in). The catalysed reaction is 17beta-estradiol 17-sulfate(out) + 2 Na(+)(out) = 17beta-estradiol 17-sulfate(in) + 2 Na(+)(in). The enzyme catalyses 17alpha-hydroxypregnenolone 3-sulfate(out) + 2 Na(+)(out) = 17alpha-hydroxypregnenolone 3-sulfate(in) + 2 Na(+)(in). It carries out the reaction epiandrosterone 3-sulfate(out) + 2 Na(+)(out) = epiandrosterone 3-sulfate(in) + 2 Na(+)(in). It catalyses the reaction epitestosterone 17-sulfate(out) + 2 Na(+)(out) = epitestosterone 17-sulfate(in) + 2 Na(+)(in). The catalysed reaction is testosterone 17-sulfate(out) + 2 Na(+)(out) = testosterone 17-sulfate(in) + 2 Na(+)(in). The enzyme catalyses 16alpha-hydroxydehydroepiandrosterone 3-sulfate(out) + 2 Na(+)(out) = 16alpha-hydroxydehydroepiandrosterone 3-sulfate(in) + 2 Na(+)(in). Functionally, transports sulfoconjugated steroid hormones from the extracellular compartment into the cytosol in a sodium-dependent manner without hydrolysis. Steroid sulfate hormones are commonly considered to be biologically inactive metabolites, that may be activated by steroid sulfatases into free steroids. May play an important role by delivering sulfoconjugated steroids to specific target cells in reproductive organs. May play a role transporting the estriol precursor 16alpha-hydroxydehydroepiandrosterone 3-sulfate (16a-OH-DHEAS) at the fetal blood vessel endothelium. Can also transport other sulfoconjugated molecules such as taurolithocholic acid-3-sulfate and sulfoconjugated pyrenes. This Rattus norvegicus (Rat) protein is Sodium-dependent organic anion transporter (Slc10a6).